The primary structure comprises 1378 residues: DNA-directed RNA polymerase subunit beta (1378 aa).

It belongs to the RNA polymerase beta chain family. In terms of assembly, the RNAP catalytic core consists of 2 alpha, 1 beta, 1 beta' and 1 omega subunit. When a sigma factor is associated with the core the holoenzyme is formed, which can initiate transcription.

The enzyme catalyses RNA(n) + a ribonucleoside 5'-triphosphate = RNA(n+1) + diphosphate. DNA-dependent RNA polymerase catalyzes the transcription of DNA into RNA using the four ribonucleoside triphosphates as substrates. The protein is DNA-directed RNA polymerase subunit beta of Campylobacter jejuni (strain RM1221).